The chain runs to 292 residues: NADH-ubiquinone oxidoreductase chain 1 (292 aa).

Helical transmembrane passes span 2 to 22 (IVAS…MFTL), 71 to 91 (FAAS…GICI), 98 to 118 (GLVI…AGWA), 132 to 152 (VALM…IGLF), 167 to 187 (MPTT…VCIL), 213 to 233 (LGFA…SAIA), 235 to 255 (IYFL…AFVW), and 272 to 292 (GWKA…SVAI).

This sequence belongs to the complex I subunit 1 family.

It localises to the mitochondrion inner membrane. It catalyses the reaction a ubiquinone + NADH + 5 H(+)(in) = a ubiquinol + NAD(+) + 4 H(+)(out). Its function is as follows. Core subunit of the mitochondrial membrane respiratory chain NADH dehydrogenase (Complex I) that is believed to belong to the minimal assembly required for catalysis. Complex I functions in the transfer of electrons from NADH to the respiratory chain. The immediate electron acceptor for the enzyme is believed to be ubiquinone. This is NADH-ubiquinone oxidoreductase chain 1 (ND1) from Chlamydomonas reinhardtii (Chlamydomonas smithii).